The following is a 125-amino-acid chain: Profilin-P (125 aa).

Position 2 is an N-acetylserine (serine 2).

The protein belongs to the profilin family. In terms of assembly, occurs in many kinds of cells as a complex with monomeric actin in a 1:1 ratio.

The protein resides in the cytoplasm. Its subcellular location is the cytoskeleton. Binds to actin and affects the structure of the cytoskeleton. At high concentrations, profilin prevents the polymerization of actin, whereas it enhances it at low concentrations. By binding to PIP2, it inhibits the formation of IP3 and DG. This Physarum polycephalum (Slime mold) protein is Profilin-P (PROP).